Reading from the N-terminus, the 475-residue chain is Secreted triacylglycerol lipase LIP5 (475 aa).

The N-terminal stretch at 1–19 (MYPCTLLMVLLCLAIMTHG) is a signal peptide. Cys-129 and Cys-300 are joined by a disulfide. Ser-213 (nucleophile) is an active-site residue. Residues Asn-246 and Asn-312 are each glycosylated (N-linked (GlcNAc...) asparagine). The active site involves Asp-360. A glycan (N-linked (GlcNAc...) asparagine) is linked at Asn-369. The active site involves His-394. A glycan (N-linked (GlcNAc...) asparagine) is linked at Asn-471.

It belongs to the AB hydrolase superfamily. Lipase family. Class Lip subfamily.

It catalyses the reaction a triacylglycerol + H2O = a diacylglycerol + a fatty acid + H(+). It carries out the reaction a monoacylglycerol + H2O = glycerol + a fatty acid + H(+). The catalysed reaction is a diacylglycerol + H2O = a monoacylglycerol + a fatty acid + H(+). Secreted lipase involved in Dandruff and seborrheic dermatitis (D/SD) probably via lipase-mediated breakdown of sebaceous lipids and release of irritating free fatty acids. Has triacylglycerol lipase activity and is able to hydrolyze triolein. Mostly converts monoolein to di- and triolein, while free fatty acids are only produced in low amounts. The polypeptide is Secreted triacylglycerol lipase LIP5 (Malassezia globosa (strain ATCC MYA-4612 / CBS 7966) (Dandruff-associated fungus)).